The chain runs to 318 residues: Taste receptor type 2 member 14 (318 aa).

The Extracellular segment spans residues 1 to 7; the sequence is MGGVIKN. A helical transmembrane segment spans residues 8 to 28; the sequence is ISTFVLIVEFIIGNLGNSFIA. The Cytoplasmic portion of the chain corresponds to 29 to 55; the sequence is LVNCIDWVKRRKISLVDQLLTALAISR. The helical transmembrane segment at 56-76 threads the bilayer; sequence ISLVWLIFGSWCVSAFFPALF. Topologically, residues 77–87 are extracellular; it reads ATEKMFRMLTN. Residues threonine 86 and tryptophan 89 each contribute to the cholesterol site. The helical transmembrane segment at 88-108 threads the bilayer; the sequence is IWAVTNHFSVWLATGLGTFYF. At 109 to 129 the chain is on the cytoplasmic side; sequence LKIANFSNSIFIYLKWRVKKV. The helical transmembrane segment at 130-150 threads the bilayer; the sequence is VLVLLLVTSVFLFLNIALINI. Residues 151–184 lie on the Extracellular side of the membrane; it reads HINASINGYGGNKTCSSDSNDFTRFSSLIALTSS. Residues asparagine 153 and asparagine 162 are each glycosylated (N-linked (GlcNAc...) asparagine). Alanine 180 is a binding site for cholesterol. A helical transmembrane segment spans residues 185-205; that stretch reads VFIFIPFILSLAIFLLLTFSL. The Cytoplasmic portion of the chain corresponds to 206-232; the sequence is WKHCKKMQHTVKASGDASTKAHRGVMQ. Residues 233 to 253 traverse the membrane as a helical segment; that stretch reads TVIAFLLLYPIFSLSFFIAVW. Residues 254-261 are Extracellular-facing; sequence TSGWLEEN. Residues 262–282 form a helical membrane-spanning segment; it reads LIILSQVMGMAYPSCHSCILI. Residues leucine 265 and valine 268 each contribute to the cholesterol site. Residues 283–317 lie on the Cytoplasmic side of the membrane; it reads LGNKKLRQASLSVLWWLKYRFKDGEPSGHKGFRES.

It belongs to the G-protein coupled receptor T2R family. As to quaternary structure, core component of the TAS2R14-GNAI1 complex, consisting of TAS2R14, GNAI1, GNB1 and GNG2; within the complex interacts with GNAI1. Core component of the TAS2R14-GNAT3 complex, consisting of TAS2R14, GNAT3, GNB1 and GNG2; within the complex interacts with GNAT3. Core component of the TAS2R14-GNAS2 complex, consisting of TAS2R14, GNAS2, GNB1 and GNG2; within the complex interacts with GNAS2.

It localises to the membrane. The enzyme catalyses Ca(2+)(in) = Ca(2+)(out). The catalysed reaction is 3',5'-cyclic AMP(in) = 3',5'-cyclic AMP(out). With respect to regulation, basal activity is enhanced by binding to bitter tastants, such as flufenamic acid and aristolochic acid. Regulated by cholesterol in a concentration-dependent manner. Functionally, gustducin-linked G-protein coupled receptor that plays a role in the perception of bitterness. The activity of this receptor stimulates GNAT3, activating the gustducin G-protein pathway. Likely plays a role in sensing the chemical composition of the gastrointestinal content and other extra-oral tissues via the inhibitory G-protein pathways. In Pongo pygmaeus (Bornean orangutan), this protein is Taste receptor type 2 member 14 (TAS2R14).